The primary structure comprises 430 residues: Tol-Pal system protein TolB (430 aa).

Residues 1-26 (MSLMTKLGLRTLVASCLIAVGGAANA) form the signal peptide.

This sequence belongs to the TolB family. The Tol-Pal system is composed of five core proteins: the inner membrane proteins TolA, TolQ and TolR, the periplasmic protein TolB and the outer membrane protein Pal. They form a network linking the inner and outer membranes and the peptidoglycan layer.

It is found in the periplasm. Functionally, part of the Tol-Pal system, which plays a role in outer membrane invagination during cell division and is important for maintaining outer membrane integrity. This chain is Tol-Pal system protein TolB, found in Paraburkholderia xenovorans (strain LB400).